Consider the following 886-residue polypeptide: Peptidyl-lysine N-acetyltransferase PatZ (886 aa).

One can recognise an ATP-grasp domain in the interval 487–523; the sequence is QPILQAYGMNTLPTWIASDSTEAVHIAEQIGYPVALK. The 156-residue stretch at 726–881 folds into the N-acetyltransferase domain; it reads CLFRPILPED…GIVGLTLNLA (156 aa).

It in the N-terminal section; belongs to the acetate CoA ligase alpha subunit family. In the central section; belongs to the acetate CoA ligase beta subunit family. As to quaternary structure, stable tetramer in solution. Oligomerizes to an octameric form by autoacetylation. In terms of processing, autoacetylated. Deacetylated by CobB.

It carries out the reaction L-lysyl-[protein] + acetyl-CoA = N(6)-acetyl-L-lysyl-[protein] + CoA + H(+). Its function is as follows. Catalyzes the acetyl-CoA-dependent acetylation of lysine residues of a large number of target proteins. Acetylates RNase R in exponential phase cells and RNase II. Required for the glucose-dependent acetylation on multiple lysines of alpha, beta and beta' RNAP subunits. Also acetylates acetyl-coenzyme A synthetase (Acs) and the chromosomal replication initiator protein DnaA, and inhibits their activity. Overexpression leads to the acetylation of a large number of additional proteins and inhibits motility. The protein is Peptidyl-lysine N-acetyltransferase PatZ of Escherichia coli (strain K12).